A 699-amino-acid polypeptide reads, in one-letter code: MAREYKIEDYRNFGIMAHIDAGKTTTTERILYYTGKSHKIGEVHDGAATMDWMEQEQERGITITSAATTTFWKGRDGKMRRFNIIDTPGHVDFTIEVERSLRVLDGAIALLDANAGVEPQTETVWRQAEKYNVPRMIFCNKMDKTGADFYRSVEMIKTRLGATAVVMQLPIGAETEFKGVIDLVEMNALIWRDESLGAQWDVVEIPEDMKAKAEEYREKLIETVVDIDEAATEAYLEGILPDNEQIRALVRRGTIDVKFHPMFCGTAFKNKGVQPLLDAVVDYLPSPMDIPAIKGIDFKTEAEIERHADDSEPLSMLAFKIMNDPFVGSLTFARIYSGKLEKGASVINTVKDKRERVGRMLQMHSNSREDIEEAFAGDIVALAGLKETTTGDTLCDPLKPVILERMEFPEPVIQIAIEPKTKGDQEKMGLALNRLAAEDPSFRVKTDQESGQTIIAGMGELHLDIIVDRMRREFKVEATVGAPQVAYRETITRTHEEDYTHKKQSGGTGQFARVKIVFEPNPEGDEFKFESKIVGGSVPKEYIPGVQKGIESVLSSGPLAGFPMLGVKATLIDGAFHDVDSSVLAFEIASRACFREAAKKAGAQLLEPMMKVEVVTPEDYVGDVIGDLNSRRGQIQGQESRGIAVVINANVPLANMFKYVDNLRSMSQGRAQYTMTFDHYSPVPSNVATEIQAKYSGQK.

The tr-type G domain occupies 8-288 (EDYRNFGIMA…AVVDYLPSPM (281 aa)). Residues 17-24 (AHIDAGKT), 86-90 (DTPGH), and 140-143 (NKMD) contribute to the GTP site.

It belongs to the TRAFAC class translation factor GTPase superfamily. Classic translation factor GTPase family. EF-G/EF-2 subfamily.

The protein localises to the cytoplasm. In terms of biological role, catalyzes the GTP-dependent ribosomal translocation step during translation elongation. During this step, the ribosome changes from the pre-translocational (PRE) to the post-translocational (POST) state as the newly formed A-site-bound peptidyl-tRNA and P-site-bound deacylated tRNA move to the P and E sites, respectively. Catalyzes the coordinated movement of the two tRNA molecules, the mRNA and conformational changes in the ribosome. This is Elongation factor G from Rhizobium johnstonii (strain DSM 114642 / LMG 32736 / 3841) (Rhizobium leguminosarum bv. viciae).